Reading from the N-terminus, the 114-residue chain is Large ribosomal subunit protein bL19 (114 aa).

Belongs to the bacterial ribosomal protein bL19 family.

In terms of biological role, this protein is located at the 30S-50S ribosomal subunit interface and may play a role in the structure and function of the aminoacyl-tRNA binding site. This is Large ribosomal subunit protein bL19 from Lactococcus lactis subsp. cremoris (strain MG1363).